Here is a 92-residue protein sequence, read N- to C-terminus: Small ribosomal subunit protein bS20 (92 aa).

The protein belongs to the bacterial ribosomal protein bS20 family.

In terms of biological role, binds directly to 16S ribosomal RNA. The protein is Small ribosomal subunit protein bS20 of Rickettsia africae (strain ESF-5).